The primary structure comprises 293 residues: Acidic endochitinase SE2 (293 aa).

An N-terminal signal peptide occupies residues 1–25; that stretch reads MAAKIVSVLFLISLLIFASFESSHG. Residues 26 to 293 form the GH18 domain; that stretch reads SQIVIYWGQN…GYSSAIKSSV (268 aa). Intrachain disulfides connect Cys45–Cys91 and Cys75–Cys81. Residue Glu151 is the Proton donor of the active site. Residues Cys183 and Cys212 are joined by a disulfide bond.

It belongs to the glycosyl hydrolase 18 family. Chitinase class II subfamily. In terms of tissue distribution, accumulates in leaves during infection.

Its subcellular location is the secreted. The protein resides in the extracellular space. It carries out the reaction Random endo-hydrolysis of N-acetyl-beta-D-glucosaminide (1-&gt;4)-beta-linkages in chitin and chitodextrins.. Functionally, this protein functions as a defense against chitin containing fungal pathogens. This endochitinase also exhibits exochitinase activity, i.e. it is capable of hydrolyzing chito-oligosaccharides, including chitobiose. This Beta vulgaris (Sugar beet) protein is Acidic endochitinase SE2 (SE2).